The sequence spans 353 residues: MYYLSDLSHYAFFTYISVRAGFAFFIALCLSLFLMPKFITWAKAKNASQPIYEYAPETHKTKCHTPTMGGLIFISSAVIASLFCIKFDNIFAISALLCLILFCLIGLIDDLGKVLKKDNHSGLSPRMKLLAQIIAGLICILPLYFSSELSTELFIPFYKHPLFDMEIFAIVFWILVLISSSNAVNLTDGLDGLATVPSIFSLSTLGIFLYLSGNLNYSEYLLLPKIQGLGEVVIICAALIGALMGFLWYNCYPAQVFMGDSGSLALGGFIGFLAIISKNEILLLLIGFVFVLETVSVILQVGSFKIFNKRVFKMAPIHHHFEKVGWVENKIIVRFWMIALLSNLLALASIKLR.

10 helical membrane-spanning segments follow: residues 22 to 42 (FAFF…ITWA), 65 to 85 (TPTM…LFCI), 88 to 108 (DNIF…IGLI), 129 to 149 (LLAQ…SSEL), 161 to 181 (PLFD…ISSS), 192 to 212 (GLAT…LYLS), 228 to 248 (GLGE…GFLW), 256 to 276 (VFMG…LAII), 281 to 301 (ILLL…ILQV), and 330 to 350 (KIIV…LASI).

Belongs to the glycosyltransferase 4 family. MraY subfamily. Mg(2+) is required as a cofactor.

It is found in the cell inner membrane. It carries out the reaction UDP-N-acetyl-alpha-D-muramoyl-L-alanyl-gamma-D-glutamyl-meso-2,6-diaminopimeloyl-D-alanyl-D-alanine + di-trans,octa-cis-undecaprenyl phosphate = di-trans,octa-cis-undecaprenyl diphospho-N-acetyl-alpha-D-muramoyl-L-alanyl-D-glutamyl-meso-2,6-diaminopimeloyl-D-alanyl-D-alanine + UMP. The protein operates within cell wall biogenesis; peptidoglycan biosynthesis. In terms of biological role, catalyzes the initial step of the lipid cycle reactions in the biosynthesis of the cell wall peptidoglycan: transfers peptidoglycan precursor phospho-MurNAc-pentapeptide from UDP-MurNAc-pentapeptide onto the lipid carrier undecaprenyl phosphate, yielding undecaprenyl-pyrophosphoryl-MurNAc-pentapeptide, known as lipid I. This Campylobacter jejuni subsp. jejuni serotype O:6 (strain 81116 / NCTC 11828) protein is Phospho-N-acetylmuramoyl-pentapeptide-transferase.